The following is a 267-amino-acid chain: 3-methyl-2-oxobutanoate hydroxymethyltransferase (267 aa).

The Mg(2+) site is built by Asp45 and Asp84. Residues 45–46 (DS), Asp84, and Lys113 contribute to the 3-methyl-2-oxobutanoate site. Glu115 lines the Mg(2+) pocket. The active-site Proton acceptor is the Glu182.

It belongs to the PanB family. Homodecamer; pentamer of dimers. Mg(2+) is required as a cofactor.

Its subcellular location is the cytoplasm. It catalyses the reaction 3-methyl-2-oxobutanoate + (6R)-5,10-methylene-5,6,7,8-tetrahydrofolate + H2O = 2-dehydropantoate + (6S)-5,6,7,8-tetrahydrofolate. It participates in cofactor biosynthesis; coenzyme A biosynthesis. Its function is as follows. Catalyzes the reversible reaction in which hydroxymethyl group from 5,10-methylenetetrahydrofolate is transferred onto alpha-ketoisovalerate to form ketopantoate. This is 3-methyl-2-oxobutanoate hydroxymethyltransferase from Saccharolobus solfataricus (strain ATCC 35092 / DSM 1617 / JCM 11322 / P2) (Sulfolobus solfataricus).